We begin with the raw amino-acid sequence, 113 residues long: Vitelline membrane protein Vm32E (113 aa).

An N-terminal signal peptide occupies residues 1 to 17; the sequence is MKIVAFTLVAFVALAGA. Positions 33-70 constitute a VM domain; the sequence is GYPAPPCPTNYLFSCQPNLAPVPCAQQAPAYGSAGAYT.

It belongs to the vitelline membrane family.

Its subcellular location is the secreted. Functionally, major early eggshell protein. The chain is Vitelline membrane protein Vm32E from Drosophila erecta (Fruit fly).